Consider the following 570-residue polypeptide: Periplasmic trehalase (570 aa).

The signal sequence occupies residues 1–34 (MIPPEIRRSVLLQKAIKLALAGTLLTFASFSATA). Residues Arg159, 166-167 (WD), Asn203, 212-214 (RSQ), 284-286 (RPE), and Gly317 contribute to the substrate site. Residues Asp319 and Glu503 each act as proton donor/acceptor in the active site. Glu518 serves as a coordination point for substrate. Positions 544–570 (KPCDSVPSTRPASLSATPTKTPSAATQ) are disordered. A compositionally biased stretch (low complexity) spans 554–570 (PASLSATPTKTPSAATQ).

This sequence belongs to the glycosyl hydrolase 37 family. Monomer.

The protein resides in the periplasm. It catalyses the reaction alpha,alpha-trehalose + H2O = alpha-D-glucose + beta-D-glucose. Functionally, provides the cells with the ability to utilize trehalose at high osmolarity by splitting it into glucose molecules that can subsequently be taken up by the phosphotransferase-mediated uptake system. In Salmonella paratyphi A (strain AKU_12601), this protein is Periplasmic trehalase.